The sequence spans 439 residues: Uracil-regulated protein 1 (439 aa).

The tract at residues 1-24 (MLATEQSRPAECNGAHAHEKTEEV) is disordered. A GTP-binding site is contributed by 268-272 (RVHDE). Cysteine 273, cysteine 284, and cysteine 286 together coordinate Zn(2+). 315-317 (EGR) serves as a coordination point for GTP. The active-site Proton acceptor is the aspartate 353. Arginine 355 (nucleophile) is an active-site residue. Serine 377 and lysine 382 together coordinate GTP.

Belongs to the GTP cyclohydrolase II family.

Its subcellular location is the cytoplasm. It is found in the nucleus. The sequence is that of Uracil-regulated protein 1 (urg1) from Schizosaccharomyces pombe (strain 972 / ATCC 24843) (Fission yeast).